Consider the following 348-residue polypeptide: Protein pelota homolog (348 aa).

It belongs to the eukaryotic release factor 1 family. Pelota subfamily. As to quaternary structure, monomer. It depends on a divalent metal cation as a cofactor.

The protein localises to the cytoplasm. In terms of biological role, may function in recognizing stalled ribosomes, interact with stem-loop structures in stalled mRNA molecules, and effect endonucleolytic cleavage of the mRNA. May play a role in the release non-functional ribosomes and degradation of damaged mRNAs. Has endoribonuclease activity. In Methanococcus vannielii (strain ATCC 35089 / DSM 1224 / JCM 13029 / OCM 148 / SB), this protein is Protein pelota homolog.